The primary structure comprises 327 residues: Glycerol-3-phosphate dehydrogenase [NAD(P)+] (327 aa).

NADPH contacts are provided by S10, F11, R31, and K108. Sn-glycerol 3-phosphate is bound by residues K108, G136, and S138. A140 serves as a coordination point for NADPH. The sn-glycerol 3-phosphate site is built by K191, D246, S256, R257, and N258. The active-site Proton acceptor is K191. R257 is an NADPH binding site. NADPH contacts are provided by L281 and E283.

Belongs to the NAD-dependent glycerol-3-phosphate dehydrogenase family.

It localises to the cytoplasm. It carries out the reaction sn-glycerol 3-phosphate + NAD(+) = dihydroxyacetone phosphate + NADH + H(+). It catalyses the reaction sn-glycerol 3-phosphate + NADP(+) = dihydroxyacetone phosphate + NADPH + H(+). Its pathway is membrane lipid metabolism; glycerophospholipid metabolism. Its function is as follows. Catalyzes the reduction of the glycolytic intermediate dihydroxyacetone phosphate (DHAP) to sn-glycerol 3-phosphate (G3P), the key precursor for phospholipid synthesis. The sequence is that of Glycerol-3-phosphate dehydrogenase [NAD(P)+] from Ehrlichia ruminantium (strain Gardel).